The sequence spans 267 residues: Cysteine protease avirulence protein AvrPphB (267 aa).

G63 carries the N-myristoyl glycine; by host lipid modification. Catalysis depends on residues C98, H212, and D227.

It belongs to the peptidase C58 family. In terms of assembly, in infected plant cells, the 28 kDa product interacts with PBS1. Post-translationally, autocleaved. This function is essential for myristoylation in infected plant cell and for eliciting the plant hypersensitive response. In terms of processing, myristoylation of 28 kDa product in infected plant cells; it mediates the localization to membranes.

Its subcellular location is the secreted. The protein localises to the host membrane. Its function is as follows. Cysteine protease avirulence protein, which is essential during infection of plant cells from cultivar-specific of beans and Arabidopsis thaliana. The autocleavage of the protein is required for virulence function. May act by affecting the plant defense system. In plants lacking R3 or RPS5 resistance genes, it probably impairs the plant defense system and leads to the bacteria multiplication. In contrast, in plants containing the R3 or RPS5 protein, it is unable to induce disease symptoms, explaining its avirulence name. The 7 kDa product is required for the type-III translocation from Pseudomonas strains to the plant, but are partially dispensable for effector recognition following in planta expression. In infected plants, it acts by cleaving the PBS1 protein, which leads to resistance or disease, depending on the presence or absence of RPS5, respectively. Targets the Arabidopsis kinases PBS1, BIK1, PBL1, PBL2, PBL3, PBL5, PBL7, PBL9 and PBL11 for cleavage in vitro. Can block recognition of AvrB avirulence factor by plant cells by cleaving Arabidopsis RIPK kinase and suppressing Arabidopsis RPM1 activation. Cannot block AvrRpm1-induced activation of RPM1. In Pseudomonas savastanoi pv. phaseolicola (Pseudomonas syringae pv. phaseolicola), this protein is Cysteine protease avirulence protein AvrPphB (avrPph3).